The primary structure comprises 148 residues: Snaclec 2 (148 aa).

The signal sequence occupies residues 1–23 (MGRFIFVSFGLLVVFLSLSGTEA). Cystine bridges form between cysteine 27–cysteine 38, cysteine 55–cysteine 144, and cysteine 121–cysteine 136. The region spanning 34–145 (YDQNCYKAFE…CSGTHSFVCK (112 aa)) is the C-type lectin domain.

The protein belongs to the snaclec family. As to quaternary structure, heterodimer; disulfide-linked. In terms of tissue distribution, expressed by the venom gland.

It is found in the secreted. In terms of biological role, interferes with one step of hemostasis (modulation of platelet aggregation, or coagulation cascade, for example). The sequence is that of Snaclec 2 from Echis ocellatus (Ocellated saw-scaled viper).